The sequence spans 578 residues: Multidrug resistance-like ATP-binding protein MdlB (578 aa).

In terms of domain architecture, ABC transmembrane type-1 spans 25–308; the sequence is LILGFTLLLF…ITSQQSIFQQ (284 aa). 6 helical membrane passes run 26 to 46, 59 to 79, 143 to 163, 166 to 186, 196 to 216, and 260 to 280; these read ILGF…PILI, VNYS…AAIL, SLFQ…ILEW, ACIA…YQYF, VYIA…DVIQ, and LILC…FEIG. An ABC transporter domain is found at 339–573; sequence IKVKNLYFSY…KSYYKNMYYS (235 aa). 373-380 is a binding site for ATP; sequence GRTGSGKS.

This sequence belongs to the ABC transporter superfamily. Drug exporter-2 (TC 3.A.1.117) family.

It localises to the cell membrane. It catalyses the reaction ATP + H2O + xenobioticSide 1 = ADP + phosphate + xenobioticSide 2.. The protein is Multidrug resistance-like ATP-binding protein MdlB (mdlB) of Buchnera aphidicola subsp. Baizongia pistaciae (strain Bp).